Consider the following 179-residue polypeptide: Bifunctional protein PyrR (179 aa).

Residues 100–112 (VILVDDVLFTGRT) carry the PRPP-binding motif.

Belongs to the purine/pyrimidine phosphoribosyltransferase family. PyrR subfamily.

The catalysed reaction is UMP + diphosphate = 5-phospho-alpha-D-ribose 1-diphosphate + uracil. In terms of biological role, regulates the transcription of the pyrimidine nucleotide (pyr) operon in response to exogenous pyrimidines. Functionally, also displays a weak uracil phosphoribosyltransferase activity which is not physiologically significant. The polypeptide is Bifunctional protein PyrR (Haemophilus influenzae (strain 86-028NP)).